Consider the following 339-residue polypeptide: Dehydrogenase/reductase SDR family member 7 (339 aa).

Residues 1-28 (MNWELLLWLLVLCALLLLLVQLLRFLRA) form the signal peptide. NAD(+) is bound by residues serine 60 and isoleucine 62. Serine 190 contributes to the substrate binding site. Positions 203, 207, and 239 each coordinate NAD(+). The active-site Proton acceptor is the tyrosine 203.

It belongs to the short-chain dehydrogenases/reductases (SDR) family. In terms of tissue distribution, found predominantly in the adrenal glands, liver, thyroid, prostate, small intestine, colon, stomach, kidney and brain. Lower levels observed in skeletal muscle, the lung and the spleen.

The protein resides in the endoplasmic reticulum membrane. It carries out the reaction all-trans-retinol + NADP(+) = all-trans-retinal + NADPH + H(+). It catalyses the reaction 5alpha-androstane-3alpha,17beta-diol + NADP(+) = 17beta-hydroxy-5alpha-androstan-3-one + NADPH + H(+). Functionally, NADPH-dependent oxidoreductase which catalyzes the reduction of a variety of compounds bearing carbonyl groups including steroids, retinoids and xenobiotics. Catalyzes the reduction/inactivation of 5alpha-dihydrotestosterone to 3alpha-androstanediol, with a possible role in the modulation of androgen receptor function. Involved in the reduction of all-trans-retinal to all-trans-retinol. Converts cortisone to 20beta-dihydrocortisone in vitro, although the physiological relevance of this activity is questionable. Reduces exogenous compounds such as quinones (1,2-naphtoquinone, 9,10-phenantrenequinone and benzoquinone) and other xenobiotics (alpha-diketones) in vitro, suggesting a role in the biotransformation of xenobiotics with carbonyl group. A dehydrogenase activity has not been detected so far. May play a role as tumor suppressor. This chain is Dehydrogenase/reductase SDR family member 7, found in Homo sapiens (Human).